We begin with the raw amino-acid sequence, 371 residues long: Neuropeptide S receptor (371 aa).

The Extracellular portion of the chain corresponds to 1-52; it reads MPANFTEGSFDSNGTGQMLDSSPVACTETVTFTEVVEGKEWGSFYYSFKTEQ. Residues Asn-4 and Asn-13 are each glycosylated (N-linked (GlcNAc...) asparagine). Residues 53–73 traverse the membrane as a helical segment; sequence LITLWVLFVFTIVGNSVVLFS. At 74–82 the chain is on the cytoplasmic side; it reads TWRRKRKSR. Residues 83 to 103 form a helical membrane-spanning segment; it reads MTFFVTQLAITDSFTGLVNIL. The Extracellular segment spans residues 104–123; that stretch reads TDIIWRFTGDFMAPDLVCRV. Cys-121 and Cys-197 are oxidised to a cystine. A helical membrane pass occupies residues 124 to 144; that stretch reads VRYLQVVLLYASTYVLVSLSI. At 145–164 the chain is on the cytoplasmic side; sequence DRYHAIVYPMKFLQGEKQAK. A helical membrane pass occupies residues 165–185; sequence VLIVIAWSLSFLFSIPTLIIF. The Extracellular portion of the chain corresponds to 186–212; the sequence is GKRTLSNGEVQCWALWPDDSYWTPYMT. A helical transmembrane segment spans residues 213-233; the sequence is IVAFLVYFIPLTIISVMYGIV. At 234 to 275 the chain is on the cytoplasmic side; that stretch reads IRTIWIKSKTYETVISNCSDGKLCSSYNRGLISKAKIKAIKY. Residues 276 to 296 form a helical membrane-spanning segment; that stretch reads SIVIILAFICCWSPYFLFDIL. Residues 297–312 lie on the Extracellular side of the membrane; that stretch reads DNFNLLPDTQERFYAS. The helical transmembrane segment at 313–333 threads the bilayer; the sequence is VIIQNLPALNSAINPLIYCVF. At 334-371 the chain is on the cytoplasmic side; that stretch reads SSSISFPCGERRSQDSIMTFRERTERHEMQILSKPEFI.

This sequence belongs to the G-protein coupled receptor 1 family. Vasopressin/oxytocin receptor subfamily.

It is found in the cell membrane. Functionally, G-protein coupled receptor for neuropeptide S (NPS). Promotes mobilization of intracellular Ca(2+) stores. Inhibits cell growth in response to NPS binding. Involved in pathogenesis of asthma and other IgE-mediated diseases. This is Neuropeptide S receptor (NPSR1) from Macaca mulatta (Rhesus macaque).